Reading from the N-terminus, the 153-residue chain is Pheromone-binding protein Gp-9 (153 aa).

An N-terminal signal peptide occupies residues 1-19 (MKTFVLHIFIFALVAFASA). 3 disulfides stabilise this stretch: Cys-37-Cys-77, Cys-73-Cys-129, and Cys-118-Cys-138.

The protein belongs to the PBP/GOBP family. As to quaternary structure, homodimer.

The protein resides in the secreted. Its function is as follows. Colony queen number, a major feature of social organization, is associated with worker genotype for Gp-9. Colonies are headed by either a single reproductive queen (monogyne form) or multiple queens (polygyne form). Differences in worker Gp-9 genotypes between social forms may cause differences in workers' abilities to recognize queens and regulate their numbers. The chain is Pheromone-binding protein Gp-9 from Solenopsis pusillignis (Fire ant).